Consider the following 486-residue polypeptide: Cardiolipin synthase A (486 aa).

The next 2 membrane-spanning stretches (helical) occupy residues 3–23 (TFYT…IAGV) and 38–58 (MTWL…YFAF). 2 PLD phosphodiesterase domains span residues 219–246 (MDLR…VDPR) and 399–426 (EDGL…DMRS). Residues His224, Lys226, Asp231, His404, Lys406, and Asp411 contribute to the active site.

It belongs to the phospholipase D family. Cardiolipin synthase subfamily. ClsA sub-subfamily.

Its subcellular location is the cell inner membrane. It catalyses the reaction 2 a 1,2-diacyl-sn-glycero-3-phospho-(1'-sn-glycerol) = a cardiolipin + glycerol. Catalyzes the reversible phosphatidyl group transfer from one phosphatidylglycerol molecule to another to form cardiolipin (CL) (diphosphatidylglycerol) and glycerol. This Proteus mirabilis (strain HI4320) protein is Cardiolipin synthase A.